Here is a 65-residue protein sequence, read N- to C-terminus: UPF0434 protein RPD_0454 (65 aa).

Belongs to the UPF0434 family.

This Rhodopseudomonas palustris (strain BisB5) protein is UPF0434 protein RPD_0454.